A 137-amino-acid polypeptide reads, in one-letter code: Large ribosomal subunit protein uL16 (137 aa).

Basic residues predominate over residues 1–17 (MLQPKRTKFRKQQKGRN). The segment at 1–21 (MLQPKRTKFRKQQKGRNRGQA) is disordered.

This sequence belongs to the universal ribosomal protein uL16 family. Part of the 50S ribosomal subunit.

Functionally, binds 23S rRNA and is also seen to make contacts with the A and possibly P site tRNAs. In Nitrosococcus oceani (strain ATCC 19707 / BCRC 17464 / JCM 30415 / NCIMB 11848 / C-107), this protein is Large ribosomal subunit protein uL16.